A 1906-amino-acid chain; its full sequence is A disintegrin and metalloproteinase with thrombospondin motifs 20 (1906 aa).

Positions 1–26 are cleaved as a signal peptide; that stretch reads MRVAKWLTGLLCPISLLLTGSWEVRF. Positions 27–249 are excised as a propeptide; it reads HPRQEALVKT…RSQLHSRNKR (223 aa). 2 N-linked (GlcNAc...) asparagine glycosylation sites follow: Asn92 and Asn221. A disordered region spans residues 201–222; that stretch reads PCEVSENQMEKTALPSQSSRNT. The 210-residue stretch at 255–464 folds into the Peptidase M12B domain; the sequence is RYVEVMVTAD…GHGECLLDKP (210 aa). 11 disulfide bridges follow: Cys330–Cys383, Cys359–Cys365, Cys377–Cys459, Cys415–Cys443, Cys486–Cys508, Cys497–Cys518, Cys503–Cys537, Cys531–Cys542, Cys565–Cys602, Cys569–Cys607, and Cys580–Cys592. Residue His399 coordinates Zn(2+). Residue Glu400 is part of the active site. The Zn(2+) site is built by His403 and His409. Positions 465-552 constitute a Disintegrin domain; the sequence is NGRTYDLSPQ…VTRDMETRPV (88 aa). A TSP type-1 1 domain is found at 553-608; that stretch reads DGEWGPWGPYSSCSRTCGGGIKSTARLCDRPEPRNGGRYCVGRRMKFRSCNTDSCP. N-linked (GlcNAc...) asparagine glycans are attached at residues Asn714, Asn798, and Asn805. The segment at 721 to 842 is spacer; the sequence is AGVFNSAHYG…FNIPIEERSN (122 aa). 7 consecutive TSP type-1 domains span residues 843–901, 906–962, 962–1015, 1017–1074, 1075–1131, 1148–1202, and 1203–1260; these read LFSW…MDCE, IIGK…GSCV, VLTR…NCNE, PCPS…RACA, SWHV…APCL, RAAQ…LCFS, and PCGE…AACP. Residue Asn1057 is glycosylated (N-linked (GlcNAc...) asparagine). The segment at 1265–1295 is disordered; the sequence is RAPSSSEQPSHVPSRNVPLTHKPGENQDQGA. The span at 1266–1277 shows a compositional bias: polar residues; that stretch reads APSSSEQPSHVP. TSP type-1 domains follow at residues 1300–1351, 1354–1411, 1412–1465, 1468–1526, 1527–1584, 1585–1648, and 1650–1706; these read RGNQ…RHCG, PCPH…HACP, EDVS…KACR, RCPS…QDCM, RYQW…PHCK, YSVV…LRSC, and HVAT…NDCK. The N-linked (GlcNAc...) asparagine glycan is linked to Asn1562. One can recognise a GON domain in the interval 1707–1906; it reads LLTTCKELQV…MATGLSIQVL (200 aa). N-linked (GlcNAc...) asparagine glycosylation is found at Asn1719, Asn1759, and Asn1777.

Requires Zn(2+) as cofactor. The precursor is cleaved by a furin endopeptidase. Post-translationally, glycosylated. Can be O-fucosylated by POFUT2 on a serine or a threonine residue found within the consensus sequence C1-X(2)-(S/T)-C2-G of the TSP type-1 repeat domains where C1 and C2 are the first and second cysteine residue of the repeat, respectively. Fucosylated repeats can then be further glycosylated by the addition of a beta-1,3-glucose residue by the glucosyltransferase, B3GALTL. Fucosylation mediates the efficient secretion of ADAMTS family members. Can also be C-glycosylated with one or two mannose molecules on tryptophan residues within the consensus sequence W-X-X-W of the TPRs, and N-glycosylated. These other glycosylations can also facilitate secretion. In terms of tissue distribution, expressed at low level in testis and brain.

Its subcellular location is the secreted. The protein localises to the extracellular space. It localises to the extracellular matrix. In terms of biological role, may play a role in tissue-remodeling process occurring in both normal and pathological conditions. May have a protease-independent function in the transport from the endoplasmic reticulum to the Golgi apparatus of secretory cargos, mediated by the GON domain. This Mus musculus (Mouse) protein is A disintegrin and metalloproteinase with thrombospondin motifs 20 (Adamts20).